A 201-amino-acid polypeptide reads, in one-letter code: 3-isopropylmalate dehydratase small subunit (201 aa).

Belongs to the LeuD family. LeuD type 1 subfamily. Heterodimer of LeuC and LeuD.

It catalyses the reaction (2R,3S)-3-isopropylmalate = (2S)-2-isopropylmalate. The protein operates within amino-acid biosynthesis; L-leucine biosynthesis; L-leucine from 3-methyl-2-oxobutanoate: step 2/4. Its function is as follows. Catalyzes the isomerization between 2-isopropylmalate and 3-isopropylmalate, via the formation of 2-isopropylmaleate. The chain is 3-isopropylmalate dehydratase small subunit from Paramagnetospirillum magneticum (strain ATCC 700264 / AMB-1) (Magnetospirillum magneticum).